The following is a 145-amino-acid chain: D-aminoacyl-tRNA deacylase (145 aa).

Residues 137 to 138 carry the Gly-cisPro motif, important for rejection of L-amino acids motif; the sequence is GP.

The protein belongs to the DTD family. In terms of assembly, homodimer.

Its subcellular location is the cytoplasm. It catalyses the reaction glycyl-tRNA(Ala) + H2O = tRNA(Ala) + glycine + H(+). The enzyme catalyses a D-aminoacyl-tRNA + H2O = a tRNA + a D-alpha-amino acid + H(+). Functionally, an aminoacyl-tRNA editing enzyme that deacylates mischarged D-aminoacyl-tRNAs. Also deacylates mischarged glycyl-tRNA(Ala), protecting cells against glycine mischarging by AlaRS. Acts via tRNA-based rather than protein-based catalysis; rejects L-amino acids rather than detecting D-amino acids in the active site. By recycling D-aminoacyl-tRNA to D-amino acids and free tRNA molecules, this enzyme counteracts the toxicity associated with the formation of D-aminoacyl-tRNA entities in vivo and helps enforce protein L-homochirality. The polypeptide is D-aminoacyl-tRNA deacylase (Limosilactobacillus reuteri (strain DSM 20016) (Lactobacillus reuteri)).